A 440-amino-acid chain; its full sequence is MESQQLSQHSPISHGSACASVTSKEVHTNQDPLDVSASKTEECEKASTKANSQQTTTPASSAVPENPHHASPQPASVPPPQNGPYPQQCMMTQNQANPSGWSFYGHPSMIPYTPYQMSPMYFPPGPQSQFPQYPSSVGTPLSTPSPESGNTFTDSSSADSDMTSTKKYVRPPPMLTSPNDFPNWVKTYIKFLQNSNLGGIIPTVNGKPVRQITDDELTFLYNTFQIFAPSQFLPTWVKDILSVDYTDIMKILSKSIEKMQSDTQEANDIVTLANLQYNGSTPADAFETKVTNIIDRLNNNGIHINNKVACQLIMRGLSGEYKFLRYTRHRHLNMTVAELFLDIHAIYEEQQGSRNSKPNYRRNLSDEKNDSRSYTNTTKPKVIARNPQKTNNSKSKTARAHNVSTSNNSPSTDNDSISKSTTEPIQLNNKHDLHLRPGTY.

3 stretches are compositionally biased toward polar residues: residues 1-23 (MESQQLSQHSPISHGSACASVTS), 48-60 (TKANSQQTTTPAS), and 127-152 (QSQFPQYPSSVGTPLSTPSPESGNTF). Disordered stretches follow at residues 1–93 (MESQ…MMTQ), 126–174 (PQSQ…PPPM), and 352–440 (GSRN…PGTY). Residues 153 to 165 (TDSSSADSDMTST) show a composition bias toward low complexity. The tract at residues 299–401 (NNGIHINNKV…NSKSKTARAH (103 aa)) is RNA-binding. A compositionally biased stretch (low complexity) spans 402–418 (NVSTSNNSPSTDNDSIS). Phosphoserine is present on S416. Positions 419–428 (KSTTEPIQLN) are enriched in polar residues. Residues 429–440 (NKHDLHLRPGTY) show a composition bias toward basic and acidic residues.

Homotrimer.

It localises to the cytoplasm. In terms of biological role, capsid protein (CA) is the structural component of the virus-like particle (VLP), forming the shell that encapsulates the retrotransposons dimeric RNA genome. The particles are assembled from trimer-clustered units and there are holes in the capsid shells that allow for the diffusion of macromolecules. CA also has nucleocapsid-like chaperone activity, promoting primer tRNA(i)-Met annealing to the multipartite primer-binding site (PBS), dimerization of Ty1 RNA and initiation of reverse transcription. In Saccharomyces cerevisiae (strain ATCC 204508 / S288c) (Baker's yeast), this protein is Transposon Ty1-LR2 Gag polyprotein (TY1A-LR2).